Here is a 138-residue protein sequence, read N- to C-terminus: Histone H2B.3 (138 aa).

Composition is skewed to basic and acidic residues over residues M1 to T18 and E26 to K38. The disordered stretch occupies residues M1–K46. 2 positions are modified to N6-acetyllysine: K7 and K27. K134 is covalently cross-linked (Glycyl lysine isopeptide (Lys-Gly) (interchain with G-Cter in ubiquitin)).

It belongs to the histone H2B family. As to quaternary structure, the nucleosome is a histone octamer containing two molecules each of H2A, H2B, H3 and H4 assembled in one H3-H4 heterotetramer and two H2A-H2B heterodimers. The octamer wraps approximately 147 bp of DNA. Can be acetylated to form H2BK6ac and H2BK33ac. Post-translationally, monoubiquitinated to form H2BK143ub1; may give a specific tag for epigenetic transcriptional activation.

Its subcellular location is the nucleus. The protein resides in the chromosome. Functionally, core component of nucleosome. Nucleosomes wrap and compact DNA into chromatin, limiting DNA accessibility to the cellular machineries which require DNA as a template. Histones thereby play a central role in transcription regulation, DNA repair, DNA replication and chromosomal stability. DNA accessibility is regulated via a complex set of post-translational modifications of histones, also called histone code, and nucleosome remodeling. This chain is Histone H2B.3, found in Triticum aestivum (Wheat).